A 345-amino-acid polypeptide reads, in one-letter code: L-threonine 3-dehydrogenase (345 aa).

A Zn(2+)-binding site is contributed by cysteine 39. Active-site charge relay system residues include threonine 41 and histidine 44. The Zn(2+) site is built by histidine 64, glutamate 65, cysteine 94, cysteine 97, cysteine 100, and cysteine 108. NAD(+)-binding positions include isoleucine 176, aspartate 196, arginine 201, 263–265 (LGI), and 287–288 (VY).

The protein belongs to the zinc-containing alcohol dehydrogenase family. Homotetramer. Requires Zn(2+) as cofactor.

The protein localises to the cytoplasm. The enzyme catalyses L-threonine + NAD(+) = (2S)-2-amino-3-oxobutanoate + NADH + H(+). It participates in amino-acid degradation; L-threonine degradation via oxydo-reductase pathway; glycine from L-threonine: step 1/2. Catalyzes the NAD(+)-dependent oxidation of L-threonine to 2-amino-3-ketobutyrate. This Anaeromyxobacter dehalogenans (strain 2CP-1 / ATCC BAA-258) protein is L-threonine 3-dehydrogenase.